A 142-amino-acid polypeptide reads, in one-letter code: Hemoglobin subunit alpha-2 (142 aa).

In terms of domain architecture, Globin spans 2–142; the sequence is VLSAADKSNV…VSTVLTSKYR (141 aa). O2 is bound at residue histidine 59. Histidine 88 contacts heme b.

This sequence belongs to the globin family. As to quaternary structure, heterotetramer of two alpha chains and two beta chains.

In terms of biological role, involved in oxygen transport from the lung to the various peripheral tissues. Functionally, hemopressin acts as an antagonist peptide of the cannabinoid receptor CNR1. Hemopressin-binding efficiently blocks cannabinoid receptor CNR1 and subsequent signaling. In Capra hircus (Goat), this protein is Hemoglobin subunit alpha-2 (HBA2).